Here is a 153-residue protein sequence, read N- to C-terminus: Probable ubiquitin-conjugating enzyme E2 C (153 aa).

Positions 6–153 constitute a UBC core domain; sequence SVSKRLQSEL…KRYQEATSRP (148 aa). Cys90 functions as the Glycyl thioester intermediate in the catalytic mechanism.

The protein belongs to the ubiquitin-conjugating enzyme family. In terms of assembly, component of the APC/C complex. In terms of processing, autoubiquitinated by the APC/C complex, leading to its degradation by the proteasome.

It carries out the reaction S-ubiquitinyl-[E1 ubiquitin-activating enzyme]-L-cysteine + [E2 ubiquitin-conjugating enzyme]-L-cysteine = [E1 ubiquitin-activating enzyme]-L-cysteine + S-ubiquitinyl-[E2 ubiquitin-conjugating enzyme]-L-cysteine.. It participates in protein modification; protein ubiquitination. Functionally, catalyzes the covalent attachment of ubiquitin to other proteins. Acts as an essential factor of the anaphase promoting complex/cyclosome (APC/C), a cell cycle-regulated ubiquitin ligase that controls progression through mitosis. Acts by initiating polyubiquitin chains on APC/C substrates, leading to the degradation of APC/C substrates by the proteasome and promoting mitotic exit. The polypeptide is Probable ubiquitin-conjugating enzyme E2 C (ube2c) (Dictyostelium discoideum (Social amoeba)).